The primary structure comprises 692 residues: Elongation factor G (692 aa).

Positions 8–282 (ENTRNIGIMA…GVVDYLPSPV (275 aa)) constitute a tr-type G domain. Residues 17-24 (AHIDAGKT), 81-85 (DTPGH), and 135-138 (NKMD) contribute to the GTP site.

It belongs to the TRAFAC class translation factor GTPase superfamily. Classic translation factor GTPase family. EF-G/EF-2 subfamily.

The protein resides in the cytoplasm. Its function is as follows. Catalyzes the GTP-dependent ribosomal translocation step during translation elongation. During this step, the ribosome changes from the pre-translocational (PRE) to the post-translocational (POST) state as the newly formed A-site-bound peptidyl-tRNA and P-site-bound deacylated tRNA move to the P and E sites, respectively. Catalyzes the coordinated movement of the two tRNA molecules, the mRNA and conformational changes in the ribosome. The protein is Elongation factor G of Geobacillus sp. (strain WCH70).